The following is a 176-amino-acid chain: Ribosome rescue factor SmrB (176 aa).

Positions 98 to 173 (LDLHGLTQKQ…GTAALLLLIE (76 aa)) constitute a Smr domain.

The protein belongs to the SmrB family. In terms of assembly, associates with collided ribosomes, but not with correctly translating polysomes.

Acts as a ribosome collision sensor. Detects stalled/collided disomes (pairs of ribosomes where the leading ribosome is stalled and a second ribosome has collided with it) and endonucleolytically cleaves mRNA at the 5' boundary of the stalled ribosome. Stalled/collided disomes form a new interface (primarily via the 30S subunits) that binds SmrB. Cleaved mRNA becomes available for tmRNA ligation, leading to ribosomal subunit dissociation and rescue of stalled ribosomes. The protein is Ribosome rescue factor SmrB of Yersinia pseudotuberculosis serotype O:1b (strain IP 31758).